The sequence spans 430 residues: Ribosomal protein uS12 methylthiotransferase RimO (430 aa).

One can recognise an MTTase N-terminal domain in the interval 1–116; it reads MRVGIKVLGC…IANAIENGTD (116 aa). 6 residues coordinate [4Fe-4S] cluster: Cys10, Cys46, Cys79, Cys148, Cys152, and Cys155. Positions 134-365 constitute a Radical SAM core domain; it reads LEERPYAYVK…LLQAEISNSR (232 aa). Residues 367–430 form the TRAM domain; the sequence is DRFVGKKLKF…DEYDMWGSVI (64 aa).

It belongs to the methylthiotransferase family. RimO subfamily. Requires [4Fe-4S] cluster as cofactor.

It localises to the cytoplasm. The catalysed reaction is L-aspartate(89)-[ribosomal protein uS12]-hydrogen + (sulfur carrier)-SH + AH2 + 2 S-adenosyl-L-methionine = 3-methylsulfanyl-L-aspartate(89)-[ribosomal protein uS12]-hydrogen + (sulfur carrier)-H + 5'-deoxyadenosine + L-methionine + A + S-adenosyl-L-homocysteine + 2 H(+). Catalyzes the methylthiolation of an aspartic acid residue of ribosomal protein uS12. This chain is Ribosomal protein uS12 methylthiotransferase RimO, found in Thermotoga petrophila (strain ATCC BAA-488 / DSM 13995 / JCM 10881 / RKU-1).